Reading from the N-terminus, the 513-residue chain is Sugar transport protein MST8 (513 aa).

Topologically, residues 1 to 17 (MAGGAMTDTDGAHKNYP) are cytoplasmic. The helical transmembrane segment at 18–38 (GKMTIFVFLACLVASSGGLIF) threads the bilayer. Residues 39-81 (GYDIGISGGVTSMDSFLIKFFPSVYAKEKEMVETNQYCKFDSE) lie on the Extracellular side of the membrane. Residues 82–102 (LLTLFTSSLYLAALIASLFAS) traverse the membrane as a helical segment. Topologically, residues 103 to 116 (VITRKFGRRITMLG) are cytoplasmic. A helical membrane pass occupies residues 117-137 (GGVIFLVGAILNGAAADVAML). The Extracellular portion of the chain corresponds to 138-139 (II). Residues 140–160 (GRILLGIGVGFSNQAVPLYLS) form a helical membrane-spanning segment. The Cytoplasmic portion of the chain corresponds to 161–166 (EMAPAR). Residues 167–187 (MRGMLNISFQLMITVGILAAN) form a helical membrane-spanning segment. Topologically, residues 188-201 (LINYFTDKIAGGWG) are extracellular. A helical transmembrane segment spans residues 202–222 (WRVSLGLAAVPAVIMAGGSLF). Residues 223–294 (LPDTPNSLLS…LVMSVLIPTL (72 aa)) are Cytoplasmic-facing. Residues 295 to 315 (QQLTGINVVMFYAPVLFKTIG) traverse the membrane as a helical segment. Over 316–320 (FGGTA) the chain is Extracellular. A helical membrane pass occupies residues 321–341 (SLMSAVITGLVNMFATFVSIA). The Cytoplasmic segment spans residues 342–347 (TVDRLG). The helical transmembrane segment at 348 to 368 (RRKLLLQGGVQMIFAQFILGT) threads the bilayer. Over 369 to 385 (LIAVKFGTAGVANISRG) the chain is Extracellular. A helical transmembrane segment spans residues 386–406 (YAIVVVLCICVFVSAFAWSWG). The Cytoplasmic portion of the chain corresponds to 407–425 (PLGWLVPSEIFPLEIRSAA). Residues 426-446 (QSVVVVFNMAFTFIIAQIFLM) traverse the membrane as a helical segment. Residues 447 to 450 (MLCH) lie on the Extracellular side of the membrane. The helical transmembrane segment at 451–471 (LKFGLFYFFGAMELIMTGFVF) threads the bilayer. At 472–512 (FFLPETKGIPIEEMDRIWGKHWYWRRFVGAGAGGKVEITST) the chain is on the cytoplasmic side.

This sequence belongs to the major facilitator superfamily. Sugar transporter (TC 2.A.1.1) family. As to expression, expressed specifically in anthers.

Its subcellular location is the membrane. In terms of biological role, mediates active uptake of hexoses by sugar:proton symport. May play an important role in transporting monosaccharides during anther development. The polypeptide is Sugar transport protein MST8 (Oryza sativa subsp. japonica (Rice)).